A 600-amino-acid chain; its full sequence is Estrogen receptor (600 aa).

The segment at 1–189 (MTMTLHTKAS…IMESAKETRY (189 aa)) is modulating (transactivation AF-1); mediates interaction with MACROD1. Ser-10 carries O-linked (GlcNAc) serine glycosylation. The required for interaction with NCOA1 stretch occupies residues 35-47 (MERALGEVYVDNS). The tract at residues 35 to 179 (MERALGEVYV…LSSSSEKGNM (145 aa)) is interaction with DDX5; self-association. Phosphoserine; by CDK2 is present on residues Ser-109 and Ser-111. Ser-123 bears the Phosphoserine mark. The disordered stretch occupies residues 148 to 177 (DTGPPAFYRSNSDNRRQNGRERLSSSSEKG). Over residues 159 to 170 (SDNRRQNGRERL) the composition is skewed to basic and acidic residues. Position 172 is a phosphoserine; by CK2 (Ser-172). 2 consecutive NR C4-type zinc fingers follow at residues 190–210 (CAVCNDYASGYHYGVWSCEGC) and 226–250 (CPATNQCTIDKNRRKSCQACRLRKC). The segment at residues 190–255 (CAVCNDYASG…RLRKCYEVGM (66 aa)) is a DNA-binding region (nuclear receptor). Residues 190-315 (CAVCNDYASG…TKKNSPALSL (126 aa)) are mediates interaction with DNTTIP2. Residues 256-315 (MKGGIRKDRRGGRMLKHKRQRDDLEGRNEMGTSGDMRAANLWPSPLVIKHTKKNSPALSL) form a hinge region. Arg-265 is modified (asymmetric dimethylarginine; by PRMT1). The tract at residues 267-600 (GRMLKHKRQR…PEAEGFPNTI (334 aa)) is interaction with AKAP13. Residues 269–600 (MLKHKRQRDD…PEAEGFPNTI (332 aa)) are self-association. The 237-residue stretch at 316 to 552 (TADQMVSALL…DLLLEMLDAH (237 aa)) folds into the NR LBD domain. The segment at 316-600 (TADQMVSALL…PEAEGFPNTI (285 aa)) is transactivation AF-2. 17beta-estradiol is bound by residues Glu-358 and Arg-399. Cys-452 is lipidated: S-palmitoyl cysteine. His-529 provides a ligand contact to 17beta-estradiol. Tyr-542 carries the post-translational modification Phosphotyrosine; by Tyr-kinases. The tract at residues 558–581 (ASRMGVPPEEPSQSQLTTTSSTSA) is disordered. A compositionally biased stretch (low complexity) spans 569–581 (SQSQLTTTSSTSA). O-linked (GlcNAc) threonine glycosylation occurs at Thr-576.

The protein belongs to the nuclear hormone receptor family. NR3 subfamily. Interacts with BCAS3. Binds DNA as a homodimer. Can form a heterodimer with ESR2. Interacts with coactivator NCOA5. Interacts with PELP1, the interaction is enhanced by 17-beta-estradiol; the interaction increases ESR1 transcriptional activity. Interacts with NCOA7; the interaction is ligand-inducible. Interacts with AKAP13, CUEDC2, HEXIM1, KDM5A, MAP1S, SMARD1, and UBE1C. Interacts with MUC1; the interaction is stimulated by 7 beta-estradiol (E2) and enhances ESR1-mediated transcription. Interacts with DNTTIP2, and UIMC1. Interacts with KMT2D/MLL2. Interacts with ATAD2; the interaction is enhanced by estradiol. Interacts with KIF18A and LDB1. Interacts with RLIM (via its C-terminus). Interacts with MACROD1. Interacts with SH2D4A and PLCG. Interacts with SH2D4A; the interaction blocks binding to PLCG and inhibits estrogen-induced cell proliferation. Interacts with DYNLL1. Interacts with CCDC62; the interaction requires estradiol and appears to enhance the transcription of target genes. Interacts with NR2C1; the interaction prevents homodimerization of ESR1 and suppresses its transcriptional activity and cell growth. Interacts with DNAAF4. Interacts with PRMT2. Interacts with RBFOX2. Interacts with EP300; the interaction is estrogen-dependent and enhanced by CITED1. Interacts with CITED1; the interaction is estrogen-dependent. Interacts with FAM120B, FOXL2, PHB2 and SLC30A9. Interacts with coactivators NCOA3 and NCOA6. Interacts with STK3/MST2 only in the presence of SAV1 and vice-versa. Binds to CSNK1D. Interacts with NCOA2; NCOA2 can interact with ESR1 AF-1 and AF-2 domains simultaneously and mediate their transcriptional synergy. Interacts with DDX5. Interacts with NCOA1; the interaction seems to require a self-association of N-terminal and C-terminal regions. Interacts with ZNF366, DDX17, NFKB1, RELA, SP1 and SP3. Interacts with NRIP1. Interacts with GPER1; the interaction occurs in an estrogen-dependent manner. Interacts with TRIP4 (ufmylated); estrogen dependent. Interacts with LMTK3; the interaction phosphorylates ESR1 (in vitro) and protects it against proteasomal degradation. Interacts with CCAR2 (via N-terminus) in a ligand-independent manner. Interacts with ZFHX3. Interacts with SFR1 in a ligand-dependent and -independent manner. Interacts with DCAF13, LATS1 and DCAF1; regulates ESR1 ubiquitination and ubiquitin-mediated proteasomal degradation. Interacts (via DNA-binding domain) with POU4F2 (C-terminus); this interaction increases the estrogen receptor ESR1 transcriptional activity in a DNA- and ligand 17-beta-estradiol-independent manner. Interacts with ESRRB isoform 1. Interacts with UBE3A and WBP2. Interacts with GTF2B. Interacts with RBM39. In the absence of hormonal ligand, interacts with TACC1. Interacts with PI3KR1 or PI3KR2 and PTK2/FAK1. Interacts with SRC. Interacts with BAG1; the interaction is promoted in the absence of estradiol (17-beta-estradiol/E2). Interacts with and ubiquitinated by STUB1; the interaction is promoted in the absence of estradiol (17-beta-estradiol/E2). Interacts with NEDD8. Phosphorylated by cyclin A/CDK2 and CK1. Phosphorylation probably enhances transcriptional activity. Dephosphorylation at Ser-123 by PPP5C inhibits its transactivation activity. Phosphorylated by LMTK3 (in vitro). Post-translationally, ubiquitinated; regulated by LATS1 via DCAF1 it leads to ESR1 proteasomal degradation. Deubiquitinated by OTUB1. Ubiquitinated by STUB1/CHIP; in the CA1 hippocampal region following loss of endogenous circulating estradiol (17-beta-estradiol/E2). Ubiquitinated by UBR5, leading to its degradation: UBR5 specifically recognizes and binds ligand-bound ESR1 when it is not associated with coactivators (NCOAs). In presence of NCOAs, the UBR5-degron is not accessible, preventing its ubiquitination and degradation. In terms of processing, palmitoylated at Cys-452 by ZDHHC7 and ZDHHC21. This modification is required for plasma membrane targeting and for rapid intracellular signaling via ERK and AKT kinases and cAMP generation, but not for signaling mediated by the nuclear hormone receptor. Dimethylated by PRMT1 at Arg-265. The methylation may favor cytoplasmic localization. Demethylated by JMJD6 at Arg-265. In terms of tissue distribution, expressed in the CA1 region of the hippocampus, expression decreases with age (at protein level). Expressed in the uterus (at protein level).

Its subcellular location is the nucleus. The protein resides in the cytoplasm. It localises to the golgi apparatus. It is found in the cell membrane. Nuclear hormone receptor. The steroid hormones and their receptors are involved in the regulation of eukaryotic gene expression and affect cellular proliferation and differentiation in target tissues. Ligand-dependent nuclear transactivation involves either direct homodimer binding to a palindromic estrogen response element (ERE) sequence or association with other DNA-binding transcription factors, such as AP-1/c-Jun, c-Fos, ATF-2, Sp1 and Sp3, to mediate ERE-independent signaling. Ligand binding induces a conformational change allowing subsequent or combinatorial association with multiprotein coactivator complexes through LXXLL motifs of their respective components. Mutual transrepression occurs between the estrogen receptor (ER) and NF-kappa-B in a cell-type specific manner. Decreases NF-kappa-B DNA-binding activity and inhibits NF-kappa-B-mediated transcription from the IL6 promoter and displace RELA/p65 and associated coregulators from the promoter. Recruited to the NF-kappa-B response element of the CCL2 and IL8 promoters and can displace CREBBP. Present with NF-kappa-B components RELA/p65 and NFKB1/p50 on ERE sequences. Can also act synergistically with NF-kappa-B to activate transcription involving respective recruitment adjacent response elements; the function involves CREBBP. Can activate the transcriptional activity of TFF1. Also mediates membrane-initiated estrogen signaling involving various kinase cascades. Essential for MTA1-mediated transcriptional regulation of BRCA1 and BCAS3. Maintains neuronal survival in response to ischemic reperfusion injury when in the presence of circulating estradiol (17-beta-estradiol/E2). This is Estrogen receptor (Esr1) from Rattus norvegicus (Rat).